The following is a 269-amino-acid chain: Formamidopyrimidine-DNA glycosylase (269 aa).

P2 (schiff-base intermediate with DNA) is an active-site residue. E3 acts as the Proton donor in catalysis. Catalysis depends on K57, which acts as the Proton donor; for beta-elimination activity. The DNA site is built by H90, R109, and K150. The FPG-type zinc-finger motif lies at 235-269; the sequence is QVYGRGGEPCRVCGTPIQMAKHGQRSTFFCPACQH. R259 (proton donor; for delta-elimination activity) is an active-site residue.

Belongs to the FPG family. In terms of assembly, monomer. Requires Zn(2+) as cofactor.

It carries out the reaction Hydrolysis of DNA containing ring-opened 7-methylguanine residues, releasing 2,6-diamino-4-hydroxy-5-(N-methyl)formamidopyrimidine.. The catalysed reaction is 2'-deoxyribonucleotide-(2'-deoxyribose 5'-phosphate)-2'-deoxyribonucleotide-DNA = a 3'-end 2'-deoxyribonucleotide-(2,3-dehydro-2,3-deoxyribose 5'-phosphate)-DNA + a 5'-end 5'-phospho-2'-deoxyribonucleoside-DNA + H(+). Functionally, involved in base excision repair of DNA damaged by oxidation or by mutagenic agents. Acts as a DNA glycosylase that recognizes and removes damaged bases. Has a preference for oxidized purines, such as 7,8-dihydro-8-oxoguanine (8-oxoG). Has AP (apurinic/apyrimidinic) lyase activity and introduces nicks in the DNA strand. Cleaves the DNA backbone by beta-delta elimination to generate a single-strand break at the site of the removed base with both 3'- and 5'-phosphates. In Sodalis glossinidius (strain morsitans), this protein is Formamidopyrimidine-DNA glycosylase.